The following is a 472-amino-acid chain: Sarcalumenin (472 aa).

A signal peptide spans 1–20 (MKRLNLLCCCVASLLLLGTA). Residue L59 is glycosylated (N-linked (GlcNAc...) asparagine). Residues 89–330 (ITSKPMVLFL…IENRMENKIA (242 aa)) form the Dynamin-type G domain. A G1 motif region spans residues 99–106 (GPWSVGKS). A G2 motif region spans residues 127 to 128 (EP). The segment at 189–192 (DTPG) is G3 motif. Positions 254 to 257 (NKAD) are G4 motif. A region of interest (G5 motif) is located at residue L278. N-linked (GlcNAc...) asparagine glycans are attached at residues N280 and N388.

The protein belongs to the TRAFAC class dynamin-like GTPase superfamily. Dynamin/Fzo/YdjA family. In terms of processing, N-glycosylated.

The protein localises to the sarcoplasmic reticulum lumen. It localises to the sarcoplasmic reticulum membrane. This Gallus gallus (Chicken) protein is Sarcalumenin (SRL).